Reading from the N-terminus, the 156-residue chain is Putative pre-16S rRNA nuclease (156 aa).

Belongs to the YqgF nuclease family.

The protein localises to the cytoplasm. In terms of biological role, could be a nuclease involved in processing of the 5'-end of pre-16S rRNA. This Gloeobacter violaceus (strain ATCC 29082 / PCC 7421) protein is Putative pre-16S rRNA nuclease.